An 896-amino-acid chain; its full sequence is Protein translocase subunit SecA (896 aa).

Residues glutamine 87, 105 to 109, and aspartate 507 contribute to the ATP site; that span reads GEGKT. The interval 853–879 is disordered; it reads ESLSENDEASETQTFRRQEKKIGRNDP. The span at 866–876 shows a compositional bias: basic and acidic residues; it reads TFRRQEKKIGR. Zn(2+) contacts are provided by cysteine 880, cysteine 882, cysteine 891, and histidine 892.

This sequence belongs to the SecA family. Monomer and homodimer. Part of the essential Sec protein translocation apparatus which comprises SecA, SecYEG and auxiliary proteins SecDF-YajC and YidC. Zn(2+) serves as cofactor.

The protein localises to the cell inner membrane. Its subcellular location is the cytoplasm. The enzyme catalyses ATP + H2O + cellular proteinSide 1 = ADP + phosphate + cellular proteinSide 2.. Functionally, part of the Sec protein translocase complex. Interacts with the SecYEG preprotein conducting channel. Has a central role in coupling the hydrolysis of ATP to the transfer of proteins into and across the cell membrane, serving both as a receptor for the preprotein-SecB complex and as an ATP-driven molecular motor driving the stepwise translocation of polypeptide chains across the membrane. The protein is Protein translocase subunit SecA of Legionella pneumophila (strain Corby).